Consider the following 323-residue polypeptide: Secreted frizzled-related protein 3 (323 aa).

The signal sequence occupies residues 1 to 32 (MVCCGPGRMLLGWAGLLVLAALCLLQVPGAQA). Residues 33–150 (AACEPVRIPL…VYDRGVCISP (118 aa)) form the FZ domain. Intrachain disulfides connect Cys-35–Cys-96, Cys-43–Cys-89, Cys-80–Cys-119, Cys-108–Cys-147, and Cys-112–Cys-136. An N-linked (GlcNAc...) asparagine glycan is attached at Asn-49. One can recognise an NTR domain in the interval 178–298 (CKCKPVRATQ…WDMKLRHLGL (121 aa)). The interval 299–323 (GKTDASDSTQNQKSGRNSNPRPARS) is disordered. Over residues 304–323 (SDSTQNQKSGRNSNPRPARS) the composition is skewed to polar residues.

The protein belongs to the secreted frizzled-related protein (sFRP) family. Interacts with MYOC. Expressed in kidney, brain, testis. Weak expression in spleen and heart.

The protein resides in the secreted. Functionally, soluble frizzled-related proteins (sFRPS) function as modulators of Wnt signaling through direct interaction with Wnts. They have a role in regulating cell growth and differentiation in specific cell types. SFRP3/FRZB appears to be involved in limb skeletogenesis. Antagonist of Wnt8 signaling. Regulates chondrocyte maturation and long bone development. The sequence is that of Secreted frizzled-related protein 3 (Frzb) from Mus musculus (Mouse).